The chain runs to 218 residues: Small ribosomal subunit protein uS3c (218 aa).

In terms of domain architecture, KH type-2 spans 47-118 (VQKEMRISSG…RLNVVITRVA (72 aa)).

Belongs to the universal ribosomal protein uS3 family. In terms of assembly, part of the 30S ribosomal subunit.

The protein localises to the plastid. It is found in the chloroplast. This is Small ribosomal subunit protein uS3c (rps3) from Ceratophyllum demersum (Rigid hornwort).